The sequence spans 225 residues: Probable septum site-determining protein MinC (225 aa).

The segment at 87 to 112 (PTHMASPQGNSSKTRSSDTQPKPKTP) is disordered. A compositionally biased stretch (polar residues) spans 91 to 108 (ASPQGNSSKTRSSDTQPK).

It belongs to the MinC family. As to quaternary structure, interacts with MinD and FtsZ.

Its function is as follows. Cell division inhibitor that blocks the formation of polar Z ring septums. Rapidly oscillates between the poles of the cell to destabilize FtsZ filaments that have formed before they mature into polar Z rings. Prevents FtsZ polymerization. This chain is Probable septum site-determining protein MinC, found in Prochlorococcus marinus (strain MIT 9313).